The following is an 84-amino-acid chain: ATP synthase subunit c (84 aa).

Helical transmembrane passes span 10 to 30 (IAVGIIVGLASLGTAIGFALL) and 53 to 73 (FIIAGLLDAVPMIGIVIALLF).

The protein belongs to the ATPase C chain family. In terms of assembly, F-type ATPases have 2 components, F(1) - the catalytic core - and F(0) - the membrane proton channel. F(1) has five subunits: alpha(3), beta(3), gamma(1), delta(1), epsilon(1). F(0) has three main subunits: a(1), b(2) and c(10-14). The alpha and beta chains form an alternating ring which encloses part of the gamma chain. F(1) is attached to F(0) by a central stalk formed by the gamma and epsilon chains, while a peripheral stalk is formed by the delta and b chains.

It is found in the cell inner membrane. In terms of biological role, f(1)F(0) ATP synthase produces ATP from ADP in the presence of a proton or sodium gradient. F-type ATPases consist of two structural domains, F(1) containing the extramembraneous catalytic core and F(0) containing the membrane proton channel, linked together by a central stalk and a peripheral stalk. During catalysis, ATP synthesis in the catalytic domain of F(1) is coupled via a rotary mechanism of the central stalk subunits to proton translocation. Its function is as follows. Key component of the F(0) channel; it plays a direct role in translocation across the membrane. A homomeric c-ring of between 10-14 subunits forms the central stalk rotor element with the F(1) delta and epsilon subunits. This is ATP synthase subunit c from Vibrio alginolyticus.